The primary structure comprises 320 residues: ATP-dependent 6-phosphofructokinase (320 aa).

Position 12 (Gly-12) interacts with ATP. Residues 22 to 26 (RGVVR) and 55 to 60 (RYSVSD) contribute to the ADP site. ATP contacts are provided by residues 73-74 (RF) and 103-106 (GDGS). Residue Asp-104 participates in Mg(2+) binding. Residue 126–128 (TID) coordinates substrate. The Proton acceptor role is filled by Asp-128. Arg-155 is an ADP binding site. Residues Arg-163 and 170-172 (MGR) contribute to the substrate site. ADP contacts are provided by residues 186 to 188 (GCE), Lys-212, and 214 to 216 (KKH). Substrate is bound by residues Glu-223, Arg-244, and 250 to 253 (HIQR).

It belongs to the phosphofructokinase type A (PFKA) family. ATP-dependent PFK group I subfamily. Prokaryotic clade 'B1' sub-subfamily. Homotetramer. The cofactor is Mg(2+).

The protein resides in the cytoplasm. The catalysed reaction is beta-D-fructose 6-phosphate + ATP = beta-D-fructose 1,6-bisphosphate + ADP + H(+). Its pathway is carbohydrate degradation; glycolysis; D-glyceraldehyde 3-phosphate and glycerone phosphate from D-glucose: step 3/4. Allosterically activated by ADP and other diphosphonucleosides, and allosterically inhibited by phosphoenolpyruvate. In terms of biological role, catalyzes the phosphorylation of D-fructose 6-phosphate to fructose 1,6-bisphosphate by ATP, the first committing step of glycolysis. This chain is ATP-dependent 6-phosphofructokinase, found in Buchnera aphidicola subsp. Acyrthosiphon pisum (strain 5A).